We begin with the raw amino-acid sequence, 624 residues long: MSPVASTCLLCEMRTVVWGWQPAVPQPWHFVRFASSARLARRKPARMALSPNVARSSDRFKDSKKKKPPPTFKNNPFGGMNQTRARLPDRPIPRSDAELKRSSSDLNNKEKDAADKKQDGSLFRALKMQIALSPIPYSRRNRIKEKIAAVTSFDQFPLLPQVREAVYANAFPTLTEISPTPIQRVAIPALLRPPISETEKNKRKKKPQEEEEEELFHFDQFLLAAETGTGKTLAYLLPIINWIKQAEMVEKDTELMDNGEKQQGVTEKSKENLFELEAPELATPEHSNVARPRAIILVPTAELVEQVGKLAKQLSHTAKFRSATISSVYTPRRITNSLFNPAGIDILISTPHLLTSIAKTNPYILSRVAHLVIDEADSLLDKSFSPLTYSIMEKTAPSLTQLILCSATIPRSLDSVMEKKFPEMKRLVTPNLHAIPRRVQLGVVDVDKDPSRGNKKLACADIIWSLGKAGEVAAFLSQKGIHTAALSRDTPDQRKDEILAEFTHVKPLPTPQEVKDAQRNKRNWFSDPVPFATGENSHLGPQRNLRDTKVLVTTDLGSRGIDTVAVRNVILFDVPHTTIDFIHRLGRTGRMGRRGRGIVLVSKKDRKDVVKEVREAMFRGQALI.

The N-terminal 43 residues, 1-43 (MSPVASTCLLCEMRTVVWGWQPAVPQPWHFVRFASSARLARRK), are a transit peptide targeting the mitochondrion. The segment at 41 to 120 (RRKPARMALS…KDAADKKQDG (80 aa)) is disordered. The span at 86–119 (RLPDRPIPRSDAELKRSSSDLNNKEKDAADKKQD) shows a compositional bias: basic and acidic residues. A Q motif motif is present at residues 151 to 184 (TSFDQFPLLPQVREAVYANAFPTLTEISPTPIQR). One can recognise a Helicase ATP-binding domain in the interval 212–427 (EEELFHFDQF…EKKFPEMKRL (216 aa)). 225-232 (AETGTGKT) contributes to the ATP binding site. Positions 374 to 377 (DEAD) match the DEAD box motif. In terms of domain architecture, Helicase C-terminal spans 438 to 624 (RVQLGVVDVD…EAMFRGQALI (187 aa)).

The protein belongs to the DEAD box helicase family. MRH4 subfamily.

Its subcellular location is the mitochondrion. It carries out the reaction ATP + H2O = ADP + phosphate + H(+). In terms of biological role, ATP-binding RNA helicase involved in mitochondrial RNA metabolism. Required for maintenance of mitochondrial DNA. The protein is ATP-dependent RNA helicase MRH4, mitochondrial (MRH4) of Ajellomyces capsulatus (strain NAm1 / WU24) (Darling's disease fungus).